Here is a 341-residue protein sequence, read N- to C-terminus: Protein MENT (341 aa).

The signal sequence occupies residues 1-23; that stretch reads MVPAAGALLWVLLLNLGPRAAGA. The tract at residues 115–196 is disordered; that stretch reads AGKDSTSREL…SPSPTAMPSP (82 aa). The span at 127–155 shows a compositional bias: polar residues; it reads ATPNTAGSSSTRFIANSQEPEIRLTSSLP.

Phosphorylation sites are present in the extracellular medium. In terms of tissue distribution, plasma. Overexpressed in lymphomas.

It localises to the secreted. Involved in control of cellular proliferation. Onconcogenic modifier contributing to the tumor suppressor function of DNMT3B. The chain is Protein MENT (MENT) from Homo sapiens (Human).